Reading from the N-terminus, the 39-residue chain is Bacteriocin lactococcin-G subunit alpha (39 aa).

In terms of assembly, bacteriocin activity requires interaction of alpha and beta peptides in a molar ratio of 7:1 or 8:1 respectively.

Its function is as follows. Kills Lactococci. This Lactococcus lactis subsp. lactis (Streptococcus lactis) protein is Bacteriocin lactococcin-G subunit alpha.